Here is a 1346-residue protein sequence, read N- to C-terminus: DNA-directed RNA polymerase subunit beta (1346 aa).

This sequence belongs to the RNA polymerase beta chain family. In terms of assembly, the RNAP catalytic core consists of 2 alpha, 1 beta, 1 beta' and 1 omega subunit. When a sigma factor is associated with the core the holoenzyme is formed, which can initiate transcription.

The catalysed reaction is RNA(n) + a ribonucleoside 5'-triphosphate = RNA(n+1) + diphosphate. Functionally, DNA-dependent RNA polymerase catalyzes the transcription of DNA into RNA using the four ribonucleoside triphosphates as substrates. This is DNA-directed RNA polymerase subunit beta from Psychromonas ingrahamii (strain DSM 17664 / CCUG 51855 / 37).